Here is a 552-residue protein sequence, read N- to C-terminus: Hydroxylamine reductase (552 aa).

C3, C6, C18, and C25 together coordinate [2Fe-2S] cluster. Hybrid [4Fe-2O-2S] cluster contacts are provided by H250, E274, C318, C406, C434, C459, E493, and K495. C406 carries the post-translational modification Cysteine persulfide.

Belongs to the HCP family. The cofactor is [2Fe-2S] cluster. Hybrid [4Fe-2O-2S] cluster is required as a cofactor.

The protein resides in the cytoplasm. It catalyses the reaction A + NH4(+) + H2O = hydroxylamine + AH2 + H(+). In terms of biological role, catalyzes the reduction of hydroxylamine to form NH(3) and H(2)O. The chain is Hydroxylamine reductase from Shewanella woodyi (strain ATCC 51908 / MS32).